The sequence spans 219 residues: Ribose-5-phosphate isomerase A (219 aa).

Residues 28-31, 81-84, and 94-97 contribute to the substrate site; these read SGST, DGAD, and KGGG. Glu-103 (proton acceptor) is an active-site residue. Lys-121 contributes to the substrate binding site.

The protein belongs to the ribose 5-phosphate isomerase family. In terms of assembly, homodimer.

The enzyme catalyses aldehydo-D-ribose 5-phosphate = D-ribulose 5-phosphate. The protein operates within carbohydrate degradation; pentose phosphate pathway; D-ribose 5-phosphate from D-ribulose 5-phosphate (non-oxidative stage): step 1/1. Functionally, catalyzes the reversible conversion of ribose-5-phosphate to ribulose 5-phosphate. The chain is Ribose-5-phosphate isomerase A from Haemophilus influenzae (strain 86-028NP).